Here is a 616-residue protein sequence, read N- to C-terminus: Chaperone protein HscA (616 aa).

This sequence belongs to the heat shock protein 70 family.

Functionally, chaperone involved in the maturation of iron-sulfur cluster-containing proteins. Has a low intrinsic ATPase activity which is markedly stimulated by HscB. Involved in the maturation of IscU. This chain is Chaperone protein HscA, found in Edwardsiella ictaluri (strain 93-146).